A 342-amino-acid polypeptide reads, in one-letter code: Mitochondrial sorting homolog (342 aa).

The Mitochondrial intermembrane segment spans residues 1-6; that stretch reads MTDRNE. Residues 7–25 form a helical membrane-spanning segment; that stretch reads LIGVAIRVVAAAAVSFLSV. The Cytoplasmic segment spans residues 26-342; the sequence is RYLVKYLDPN…AHLLVEETLD (317 aa). Residue 124 to 131 participates in ATP binding; sequence GPPGCGKT.

The protein belongs to the AAA ATPase family.

The protein localises to the mitochondrion outer membrane. In terms of biological role, involved in intramitochondrial sorting of proteins. The protein is Mitochondrial sorting homolog (mspn-1) of Caenorhabditis elegans.